Consider the following 465-residue polypeptide: Pleckstrin homology domain-containing family S member 1 (465 aa).

Positions 14 to 129 (EVCKQDYFIK…WVSFMSSFRQ (116 aa)) constitute a PH domain. Positions 159 to 173 (PSSTSEAVGSSSPRN) are enriched in polar residues. 2 disordered regions span residues 159-179 (PSST…QDKH) and 258-283 (ETSH…GDLH). Positions 258–271 (ETSHESVDSSKEEP) are enriched in basic and acidic residues.

This Homo sapiens (Human) protein is Pleckstrin homology domain-containing family S member 1.